The sequence spans 159 residues: Ribosomal RNA large subunit methyltransferase H (159 aa).

S-adenosyl-L-methionine contacts are provided by residues Leu76, Gly108, and 127 to 132; that span reads FSKMTF.

The protein belongs to the RNA methyltransferase RlmH family. In terms of assembly, homodimer.

The protein resides in the cytoplasm. It carries out the reaction pseudouridine(1915) in 23S rRNA + S-adenosyl-L-methionine = N(3)-methylpseudouridine(1915) in 23S rRNA + S-adenosyl-L-homocysteine + H(+). Functionally, specifically methylates the pseudouridine at position 1915 (m3Psi1915) in 23S rRNA. The chain is Ribosomal RNA large subunit methyltransferase H from Bacillus subtilis (strain 168).